The chain runs to 253 residues: Putative ankyrin repeat protein NMB1133/NMB1171 (253 aa).

2 ANK repeats span residues 196-225 and 229-252; these read DGYT…NPAS and EGYT…LEPR.

This Neisseria meningitidis serogroup B (strain ATCC BAA-335 / MC58) protein is Putative ankyrin repeat protein NMB1133/NMB1171.